We begin with the raw amino-acid sequence, 372 residues long: Rab9 effector protein with kelch motifs (372 aa).

Kelch repeat units follow at residues 49–95 (KVFI…FLPS), 100–146 (SIWV…TSSA), 151–203 (HLYV…AAGT), 204–250 (KLFI…AAVA), and 254–303 (HVYV…VIPW). Residues 321-342 (LQDEKGDAAEKPETRSGGSREE) are disordered. Residues 322 to 342 (QDEKGDAAEKPETRSGGSREE) are compositionally biased toward basic and acidic residues. The Kelch 6 repeat unit spans residues 349 to 372 (LCFVFGGMNTEGEIYDDCLVTVVD).

In terms of assembly, interacts with PIKFYVE; the interaction recruits RABEPK to the endosomal membrane. Interacts with RAB9 in its GTP-bound conformation. In terms of processing, phosphorylated on Ser residues by PIKFYVE.

It localises to the cytoplasm. The protein resides in the endosome membrane. In terms of biological role, rab9 effector required for endosome to trans-Golgi network (TGN) transport. The chain is Rab9 effector protein with kelch motifs (Rabepk) from Rattus norvegicus (Rat).